A 408-amino-acid polypeptide reads, in one-letter code: Imidazolonepropionase (408 aa).

Positions 66 and 68 each coordinate Fe(3+). His-66 and His-68 together coordinate Zn(2+). Residues Arg-75, Tyr-138, and His-171 each coordinate 4-imidazolone-5-propanoate. Tyr-138 serves as a coordination point for N-formimidoyl-L-glutamate. His-236 is a Fe(3+) binding site. Residue His-236 participates in Zn(2+) binding. Gln-239 contributes to the 4-imidazolone-5-propanoate binding site. Fe(3+) is bound at residue Asp-311. Asp-311 provides a ligand contact to Zn(2+). The N-formimidoyl-L-glutamate site is built by Asn-313 and Gly-315. Ser-316 contacts 4-imidazolone-5-propanoate.

It belongs to the metallo-dependent hydrolases superfamily. HutI family. Zn(2+) is required as a cofactor. Fe(3+) serves as cofactor.

The protein localises to the cytoplasm. It carries out the reaction 4-imidazolone-5-propanoate + H2O = N-formimidoyl-L-glutamate. It participates in amino-acid degradation; L-histidine degradation into L-glutamate; N-formimidoyl-L-glutamate from L-histidine: step 3/3. Catalyzes the hydrolytic cleavage of the carbon-nitrogen bond in imidazolone-5-propanoate to yield N-formimidoyl-L-glutamate. It is the third step in the universal histidine degradation pathway. The chain is Imidazolonepropionase from Idiomarina loihiensis (strain ATCC BAA-735 / DSM 15497 / L2-TR).